We begin with the raw amino-acid sequence, 496 residues long: Probable cytosol aminopeptidase (496 aa).

2 residues coordinate Mn(2+): Lys261 and Asp266. Lys273 is a catalytic residue. Asp284, Asp343, and Glu345 together coordinate Mn(2+). Arg347 is an active-site residue.

Belongs to the peptidase M17 family. It depends on Mn(2+) as a cofactor.

The protein resides in the cytoplasm. The catalysed reaction is Release of an N-terminal amino acid, Xaa-|-Yaa-, in which Xaa is preferably Leu, but may be other amino acids including Pro although not Arg or Lys, and Yaa may be Pro. Amino acid amides and methyl esters are also readily hydrolyzed, but rates on arylamides are exceedingly low.. The enzyme catalyses Release of an N-terminal amino acid, preferentially leucine, but not glutamic or aspartic acids.. In terms of biological role, presumably involved in the processing and regular turnover of intracellular proteins. Catalyzes the removal of unsubstituted N-terminal amino acids from various peptides. This Bacillus licheniformis (strain ATCC 14580 / DSM 13 / JCM 2505 / CCUG 7422 / NBRC 12200 / NCIMB 9375 / NCTC 10341 / NRRL NRS-1264 / Gibson 46) protein is Probable cytosol aminopeptidase.